The chain runs to 504 residues: 2-isopropylmalate synthase (504 aa).

The 262-residue stretch at 6–267 (IIVFDTTLRD…YTDINFKEIY (262 aa)) folds into the Pyruvate carboxyltransferase domain. Residues Asp15, His201, His203, and Asn237 each contribute to the Mn(2+) site. The regulatory domain stretch occupies residues 391–504 (EIIALSSSEC…ALNSYISMKQ (114 aa)).

The protein belongs to the alpha-IPM synthase/homocitrate synthase family. LeuA type 1 subfamily. Homodimer. It depends on Mn(2+) as a cofactor.

The protein localises to the cytoplasm. The catalysed reaction is 3-methyl-2-oxobutanoate + acetyl-CoA + H2O = (2S)-2-isopropylmalate + CoA + H(+). The protein operates within amino-acid biosynthesis; L-leucine biosynthesis; L-leucine from 3-methyl-2-oxobutanoate: step 1/4. Its function is as follows. Catalyzes the condensation of the acetyl group of acetyl-CoA with 3-methyl-2-oxobutanoate (2-ketoisovalerate) to form 3-carboxy-3-hydroxy-4-methylpentanoate (2-isopropylmalate). The sequence is that of 2-isopropylmalate synthase from Campylobacter hominis (strain ATCC BAA-381 / DSM 21671 / CCUG 45161 / LMG 19568 / NCTC 13146 / CH001A).